Here is a 604-residue protein sequence, read N- to C-terminus: Elongation factor 4 (604 aa).

The 183-residue stretch at 8–190 (DKIRNFSIIA…AIVNRLPPPR (183 aa)) folds into the tr-type G domain. GTP is bound by residues 20–25 (DHGKST) and 137–140 (NKID).

This sequence belongs to the TRAFAC class translation factor GTPase superfamily. Classic translation factor GTPase family. LepA subfamily.

It is found in the cell inner membrane. It carries out the reaction GTP + H2O = GDP + phosphate + H(+). Required for accurate and efficient protein synthesis under certain stress conditions. May act as a fidelity factor of the translation reaction, by catalyzing a one-codon backward translocation of tRNAs on improperly translocated ribosomes. Back-translocation proceeds from a post-translocation (POST) complex to a pre-translocation (PRE) complex, thus giving elongation factor G a second chance to translocate the tRNAs correctly. Binds to ribosomes in a GTP-dependent manner. This chain is Elongation factor 4, found in Hyphomonas neptunium (strain ATCC 15444).